A 405-amino-acid polypeptide reads, in one-letter code: Deoxyguanosinetriphosphate triphosphohydrolase-like protein (405 aa).

One can recognise an HD domain in the interval 75-219; that stretch reads RLTHTIEVAQ…AAIADDIAYN (145 aa).

The protein belongs to the dGTPase family. Type 2 subfamily.

This chain is Deoxyguanosinetriphosphate triphosphohydrolase-like protein, found in Rhizobium etli (strain ATCC 51251 / DSM 11541 / JCM 21823 / NBRC 15573 / CFN 42).